We begin with the raw amino-acid sequence, 426 residues long: Mannose-1-phosphate guanyltransferase alpha-B (426 aa).

The protein belongs to the transferase hexapeptide repeat family.

It carries out the reaction alpha-D-mannose 1-phosphate + GTP + H(+) = GDP-alpha-D-mannose + diphosphate. It functions in the pathway nucleotide-sugar biosynthesis; GDP-alpha-D-mannose biosynthesis; GDP-alpha-D-mannose from alpha-D-mannose 1-phosphate (GTP route): step 1/1. This chain is Mannose-1-phosphate guanyltransferase alpha-B (gmppa-b), found in Xenopus laevis (African clawed frog).